The following is a 538-amino-acid chain: Bifunctional purine biosynthesis protein PurH (538 aa).

The MGS-like domain occupies 8–158 (IPAPDKVEIK…KNHAYVTTLT (151 aa)).

This sequence belongs to the PurH family.

The catalysed reaction is (6R)-10-formyltetrahydrofolate + 5-amino-1-(5-phospho-beta-D-ribosyl)imidazole-4-carboxamide = 5-formamido-1-(5-phospho-D-ribosyl)imidazole-4-carboxamide + (6S)-5,6,7,8-tetrahydrofolate. The enzyme catalyses IMP + H2O = 5-formamido-1-(5-phospho-D-ribosyl)imidazole-4-carboxamide. Its pathway is purine metabolism; IMP biosynthesis via de novo pathway; 5-formamido-1-(5-phospho-D-ribosyl)imidazole-4-carboxamide from 5-amino-1-(5-phospho-D-ribosyl)imidazole-4-carboxamide (10-formyl THF route): step 1/1. It participates in purine metabolism; IMP biosynthesis via de novo pathway; IMP from 5-formamido-1-(5-phospho-D-ribosyl)imidazole-4-carboxamide: step 1/1. In Rhizobium johnstonii (strain DSM 114642 / LMG 32736 / 3841) (Rhizobium leguminosarum bv. viciae), this protein is Bifunctional purine biosynthesis protein PurH.